The chain runs to 141 residues: Decarboxylase CPUR_05434 (141 aa).

Residues 26–121 (EGMSEEAYRN…MHDHEMFADT (96 aa)) form the EthD domain.

Belongs to the tpcK family.

The catalysed reaction is atrochrysone carboxylate + H(+) = atrochrysone + CO2. In terms of biological role, decarboxylase; part of the ergochrome gene cluster responsible for the typical purple-black color of the ergot sclerotia. The ergochrome gene cluster produces several ergot pigments including the yellow ergochrome secalonic acid and its derivatives, as well as the red anthraquinones endocrocin and clavorubin. The pathway begins with the synthesis of atrochrysone thioester by the polyketide synthase (PKS) CPUR_05437. The atrochrysone carboxyl ACP thioesterase CPUR_05436 then breaks the thioester bond and releases the atrochrysone carboxylic acid from CPUR_05437. The decarboxylase CPUR_05434 then catalyzes the concerted decarboxylation-elimination required to convert atochrysone carboxylic acid into emodin anthrone, which is further oxidized to emodin by the anthrone oxygenase CPUR_05435. Emodin is further modified to yield monodictyphenone via several steps involving CPUR_05427, CPUR_05428, CPUR_05429 and CPUR_05430. The short chain dehydrogenase/reductase CPUR_05418 then catalyzes the C-5 ketoreduction to give the xanthone skeleton of the monomeric units. Ergochromes formation requires further dimerization steps of different xanthone units, probably catalyzed by the cytochrome P450 monooxygenase CPUR_05419. CPUR_05425, CPUR_05426 and CPUR_05431 are unique to Claviceps, thus it is likely that they are involved in further modification of xanthone units or in their dimerization. The yellow ergochromes and the red anthraquinone pigments endocrocin and clavorubin are products from the same PKS derived precursors and the latter are likely shunt products in the pathway of xanthone biosynthesis. It is proposed that atrochrysone carboxylic acid released from the PKS CPUR_05437 can also be converted to endocrocin anthrone which is further oxidized into endocrocin by CPUR_05435. Endocrocin could be then modified to clavorubin, possibly by CPUR_05423 and CPUR_05431. Clavorubin is the principal anthraquinone metabolite produced by the cluster with a much higher yield compared to endocrocin. The sequence is that of Decarboxylase CPUR_05434 from Claviceps purpurea (strain 20.1) (Ergot fungus).